The following is a 505-amino-acid chain: Phosphoglycerate kinase, glycosomal (505 aa).

Residues valine 29, aspartate 30, phenylalanine 31, asparagine 32, arginine 45, serine 67, histidine 68, glycine 70, arginine 71, leucine 219, arginine 220, histidine 256, and arginine 257 each contribute to the (2R)-3-phosphoglycerate site. Positions 302 and 303 each coordinate ADP. Residue glycine 302 coordinates CDP. Alanine 303 and lysine 304 together coordinate AMP. Alanine 303 is a binding site for ATP. Alanine 303 is a Mg(2+) binding site. Lysine 304 is a binding site for (2R)-3-phosphoglycerate. Aspartate 307 lines the CDP pocket. Mg(2+) is bound at residue aspartate 307. Residues lysine 308 and glycine 326 each contribute to the ADP site. Lysine 308 contacts AMP. Position 308 (lysine 308) interacts with ATP. Glycine 326 contributes to the CDP binding site. Glycine 327 and glycine 399 together coordinate AMP. ATP-binding residues include glycine 327 and glycine 399. The ADP site is built by glycine 399 and asparagine 423. The CDP site is built by glycine 424, leucine 426, and phenylalanine 429. Residues phenylalanine 429, glutamate 430, aspartate 462, and threonine 463 each coordinate ADP. Glutamate 430 provides a ligand contact to AMP. The ATP site is built by glutamate 430, aspartate 462, and threonine 463. A Mg(2+)-binding site is contributed by aspartate 462.

The protein belongs to the phosphoglycerate kinase family. Monomer. It depends on Mg(2+) as a cofactor.

The protein resides in the glycosome. The enzyme catalyses (2R)-3-phosphoglycerate + ATP = (2R)-3-phospho-glyceroyl phosphate + ADP. It participates in carbohydrate degradation; glycolysis; pyruvate from D-glyceraldehyde 3-phosphate: step 2/5. The protein is Phosphoglycerate kinase, glycosomal (PGKA) of Crithidia fasciculata.